The primary structure comprises 988 residues: Putative disease resistance protein RGA4 (988 aa).

The NB-ARC domain maps to 137–439; it reads AAAATRETGF…MAHGFLLSKG (303 aa). An ATP-binding site is contributed by 184–191; sequence GMGGLGKT. LRR repeat units follow at residues 526 to 548, 549 to 572, 574 to 595, 596 to 620, 638 to 662, 674 to 696, 751 to 776, 784 to 808, 829 to 851, 852 to 876, 878 to 900, 901 to 925, 927 to 950, and 966 to 988; these read FVSL…SIGD, LLHL…LCKL, NLQT…QTSK, LSSL…GLLT, LGEL…KNDT, LQSL…EVKV, LPCL…DVHS, FPSL…EGEE, LSSV…SISN, LSTL…MFTS, TNLE…SLTS, LNAL…GLEG, TSLT…LQHL, and KRCD…LDIH.

Belongs to the disease resistance NB-LRR family.

Disease resistance protein. Resistance proteins guard the plant against pathogens that contain an appropriate avirulence protein via a direct or indirect interaction with this avirulence protein. That triggers a defense system which restricts the pathogen growth. The protein is Putative disease resistance protein RGA4 (RGA4) of Solanum bulbocastanum (Wild potato).